Consider the following 347-residue polypeptide: MNPLAQPIIYLTVFTGTLITALSSHWFFAWLGLEMNMLAFIPVLTKKTSPRSTEAAIKYFLTQATASMIFLMAILHNNMFSGQWTTANTTNPYSSLMIVTALAMKLGMAPFHFWVPEVTQGVPLTSGLLLLTWQKLAPISIMYQMYPSVDTNILLTLSILSILVGSWGGLNQTQLHKILAYSSITHMGWMVAVLPYNPNITILNLIIYITLTTTTFLILDLNSSTTILLLSRTWNKLTWLMPLISSTLLSLGGLPPLTGFLPKWAIIEEFAKNDNLIAPTIMAIISLLNLYFYARLIYITSITLLPMSNNVKMKWQFENTKPAPLLPTLTILTALLLPISPLILSIP.

Helical transmembrane passes span valine 13 to leucine 33, alanine 55 to leucine 75, leucine 96 to proline 116, valine 122 to methionine 142, threonine 151 to asparagine 171, isoleucine 178 to proline 198, asparagine 199 to leucine 219, leucine 237 to leucine 257, isoleucine 277 to isoleucine 297, and leucine 326 to isoleucine 346.

Belongs to the complex I subunit 2 family. As to quaternary structure, core subunit of respiratory chain NADH dehydrogenase (Complex I) which is composed of 45 different subunits. Interacts with TMEM242.

It is found in the mitochondrion inner membrane. The catalysed reaction is a ubiquinone + NADH + 5 H(+)(in) = a ubiquinol + NAD(+) + 4 H(+)(out). Functionally, core subunit of the mitochondrial membrane respiratory chain NADH dehydrogenase (Complex I) which catalyzes electron transfer from NADH through the respiratory chain, using ubiquinone as an electron acceptor. Essential for the catalytic activity and assembly of complex I. This Pongo pygmaeus (Bornean orangutan) protein is NADH-ubiquinone oxidoreductase chain 2.